Consider the following 197-residue polypeptide: uncharacterized protein (197 aa).

The 152-residue stretch at 33 to 184 (MISKIMDASS…IAEFMSILGK (152 aa)) folds into the SIS domain.

Belongs to the SIS family. PHI subfamily.

This is an uncharacterized protein from Methanothermobacter thermautotrophicus (strain ATCC 29096 / DSM 1053 / JCM 10044 / NBRC 100330 / Delta H) (Methanobacterium thermoautotrophicum).